A 569-amino-acid polypeptide reads, in one-letter code: Alpha-keto-acid decarboxylase (569 aa).

Glu57 contacts thiamine diphosphate. The thiamine pyrophosphate binding stretch occupies residues 392–474 (TAFYGMVEHR…VVVNNDGYTI (83 aa)). Asp442, Asn469, and Gly471 together coordinate Mg(2+).

Belongs to the TPP enzyme family. A metal cation serves as cofactor. Thiamine diphosphate is required as a cofactor.

Functionally, decarboxylates branched-chain and aromatic alpha-keto acids to aldehydes. In Mycobacterium leprae (strain TN), this protein is Alpha-keto-acid decarboxylase (kdc).